Here is a 479-residue protein sequence, read N- to C-terminus: Something about silencing protein 10 (479 aa).

Residues 1 to 10 (MVGRSRRRGA) show a composition bias toward basic residues. 2 disordered regions span residues 1–45 (MVGR…SYYQ) and 62–166 (KGWN…EEAQ). Position 8 is an omega-N-methylarginine (arginine 8). A compositionally biased stretch (low complexity) spans 11 to 21 (AKWAAVRAKAG). A Phosphoserine modification is found at serine 37. The span at 69–111 (SGDEEDGEEEEEEVLALDMDDEDDEDGGNAGEEEEEENADDDG) shows a compositional bias: acidic residues. Residue lysine 144 is modified to N6-acetyllysine; alternate. Residue lysine 144 forms a Glycyl lysine isopeptide (Lys-Gly) (interchain with G-Cter in SUMO2); alternate linkage. Phosphoserine is present on serine 150. Over residues 153-165 (EAEEEEREEEEEA) the composition is skewed to acidic residues. Threonine 362 is subject to Phosphothreonine. A phosphoserine mark is found at serine 365 and serine 368. Arginine 385 is subject to Citrulline. A disordered region spans residues 419-466 (RGLTPRRKKIDRNPRVKHREKFRRAKIRRRGQVREVRKEEQRYSGELS). The segment covering 422-449 (TPRRKKIDRNPRVKHREKFRRAKIRRRG) has biased composition (basic residues). Residues 450–461 (QVREVRKEEQRY) show a composition bias toward basic and acidic residues.

Belongs to the SAS10 family. Part of the small subunit (SSU) processome, composed of more than 70 proteins and the RNA chaperone small nucleolar RNA (snoRNA) U3. Citrullinated by PADI4.

The protein localises to the nucleus. It localises to the nucleolus. Essential for gene silencing: has a role in the structure of silenced chromatin. Plays a role in the developing brain. Part of the small subunit (SSU) processome, first precursor of the small eukaryotic ribosomal subunit. During the assembly of the SSU processome in the nucleolus, many ribosome biogenesis factors, an RNA chaperone and ribosomal proteins associate with the nascent pre-rRNA and work in concert to generate RNA folding, modifications, rearrangements and cleavage as well as targeted degradation of pre-ribosomal RNA by the RNA exosome. This Homo sapiens (Human) protein is Something about silencing protein 10.